We begin with the raw amino-acid sequence, 90 residues long: Small ribosomal subunit protein bS20 (90 aa).

Belongs to the bacterial ribosomal protein bS20 family.

In terms of biological role, binds directly to 16S ribosomal RNA. The protein is Small ribosomal subunit protein bS20 of Rickettsia canadensis (strain McKiel).